The following is a 78-amino-acid chain: Large ribosomal subunit protein bL28 (78 aa).

It belongs to the bacterial ribosomal protein bL28 family.

The chain is Large ribosomal subunit protein bL28 from Parasynechococcus marenigrum (strain WH8102).